A 452-amino-acid polypeptide reads, in one-letter code: Isocitrate dehydrogenase [NADP], mitochondrial (452 aa).

The transit peptide at 1-39 (MAGYLRVVRSLCRASGSRPAWAPAALTAPTSQEQPRRHY) directs the protein to the mitochondrion. Lys45, Lys48, Lys67, and Lys69 each carry N6-acetyllysine. An N6-acetyllysine; alternate mark is found at Lys80 and Lys106. An N6-succinyllysine; alternate mark is found at Lys80 and Lys106. NADP(+) is bound by residues 115–117 (TIT) and Arg122. Thr117 contributes to the D-threo-isocitrate binding site. D-threo-isocitrate contacts are provided by residues 134 to 140 (SPNGTIR) and Arg149. Lys155 carries the N6-acetyllysine modification. Residue Lys166 is modified to N6-acetyllysine; alternate. Lys166 carries the N6-succinyllysine; alternate modification. Residue Arg172 coordinates D-threo-isocitrate. Residues Lys180 and Lys193 each carry the N6-acetyllysine; alternate modification. N6-succinyllysine; alternate is present on residues Lys180 and Lys193. N6-acetyllysine is present on Lys199. An N6-acetyllysine; alternate modification is found at Lys256. Lys256 is modified (N6-succinyllysine; alternate). Residues Lys263, Lys272, Lys275, and Lys280 each carry the N6-acetyllysine modification. The residue at position 282 (Lys282) is an N6-acetyllysine; alternate. Residue Lys282 is modified to N6-succinyllysine; alternate. Residue Asp291 participates in Mn(2+) binding. Lys299 is a binding site for NADP(+). Asp314 is a binding site for Mn(2+). Residues 349–354 (GTVTRH) and Asn367 contribute to the NADP(+) site. Lys384 carries the N6-acetyllysine; alternate modification. An N6-succinyllysine; alternate modification is found at Lys384. Residues Lys400, Lys413, and Lys442 each carry the N6-acetyllysine modification.

It belongs to the isocitrate and isopropylmalate dehydrogenases family. Homodimer. Mg(2+) serves as cofactor. The cofactor is Mn(2+). In terms of processing, acetylation at Lys-413 dramatically reduces catalytic activity. Deacetylated by SIRT3.

The protein resides in the mitochondrion. It carries out the reaction D-threo-isocitrate + NADP(+) = 2-oxoglutarate + CO2 + NADPH. Its function is as follows. Plays a role in intermediary metabolism and energy production. It may tightly associate or interact with the pyruvate dehydrogenase complex. This is Isocitrate dehydrogenase [NADP], mitochondrial (IDH2) from Homo sapiens (Human).